A 492-amino-acid chain; its full sequence is Citrate synthase, peroxisomal (492 aa).

Catalysis depends on residues histidine 307, histidine 346, and aspartate 402. The interval 469 to 492 (PAKVRSQDSYSSATTKRYSKVTSH) is disordered. Residues 475–484 (QDSYSSATTK) are compositionally biased toward polar residues.

It belongs to the citrate synthase family.

It localises to the peroxisome. The catalysed reaction is oxaloacetate + acetyl-CoA + H2O = citrate + CoA + H(+). It functions in the pathway carbohydrate metabolism; tricarboxylic acid cycle; isocitrate from oxaloacetate: step 1/2. Peroxisomal protein involved in the cellular biosynthesis of citrate, and required primarily for cell growth and modulation of multicellular development. The chain is Citrate synthase, peroxisomal (cshA) from Dictyostelium discoideum (Social amoeba).